The chain runs to 340 residues: 4-hydroxy-2-oxovalerate aldolase (340 aa).

One can recognise a Pyruvate carboxyltransferase domain in the interval 8-260 (VILHDMSLRD…SHGINLYDIM (253 aa)). 16 to 17 (RD) serves as a coordination point for substrate. Asp17 provides a ligand contact to Mn(2+). The active-site Proton acceptor is the His20. Residues Ser170 and His199 each coordinate substrate. His199 and His201 together coordinate Mn(2+). Tyr290 contacts substrate.

Belongs to the 4-hydroxy-2-oxovalerate aldolase family.

The enzyme catalyses (S)-4-hydroxy-2-oxopentanoate = acetaldehyde + pyruvate. This Shewanella pealeana (strain ATCC 700345 / ANG-SQ1) protein is 4-hydroxy-2-oxovalerate aldolase.